We begin with the raw amino-acid sequence, 262 residues long: 3-methyl-2-oxobutanoate hydroxymethyltransferase (262 aa).

Mg(2+) is bound by residues Asp-44 and Asp-83. Residues 44–45 (DS), Asp-83, and Lys-113 each bind 3-methyl-2-oxobutanoate. Glu-115 is a binding site for Mg(2+). Residue Glu-182 is the Proton acceptor of the active site.

Belongs to the PanB family. In terms of assembly, homodecamer; pentamer of dimers. The cofactor is Mg(2+).

The protein localises to the cytoplasm. It carries out the reaction 3-methyl-2-oxobutanoate + (6R)-5,10-methylene-5,6,7,8-tetrahydrofolate + H2O = 2-dehydropantoate + (6S)-5,6,7,8-tetrahydrofolate. Its pathway is cofactor biosynthesis; (R)-pantothenate biosynthesis; (R)-pantoate from 3-methyl-2-oxobutanoate: step 1/2. In terms of biological role, catalyzes the reversible reaction in which hydroxymethyl group from 5,10-methylenetetrahydrofolate is transferred onto alpha-ketoisovalerate to form ketopantoate. The polypeptide is 3-methyl-2-oxobutanoate hydroxymethyltransferase (Picosynechococcus sp. (strain ATCC 27264 / PCC 7002 / PR-6) (Agmenellum quadruplicatum)).